The sequence spans 87 residues: Neurotoxin Cex1 (87 aa).

The first 19 residues, 1-19 (MNSLLMITTCLVLFGTVWA), serve as a signal peptide directing secretion. One can recognise an LCN-type CS-alpha/beta domain in the interval 20-85 (KEGYLVSKST…TYPIPGKSCG (66 aa)). 4 disulfide bridges follow: C31–C84, C35–C60, C44–C65, and C48–C67. Cysteine amide is present on C84. The propeptide occupies 85–87 (GKK).

It belongs to the long (4 C-C) scorpion toxin superfamily. Sodium channel inhibitor family. Beta subfamily. Expressed by the venom gland.

The protein localises to the secreted. In terms of biological role, beta toxins bind voltage-independently at site-4 of sodium channels (Nav) and shift the voltage of activation toward more negative potentials thereby affecting sodium channel activation and promoting spontaneous and repetitive firing. The chain is Neurotoxin Cex1 from Centruroides exilicauda (Bark scorpion).